Here is a 382-residue protein sequence, read N- to C-terminus: Phosphatidylglycerol--prolipoprotein diacylglyceryl transferase (382 aa).

Helical transmembrane passes span 18 to 38 (IQWYGIIVSIGIIFAILMFVF), 53 to 73 (FFIFIAVLTMVLGARLWSFVI), and 91 to 111 (LAIQGGILLTSIVGVIYFNFF). Arginine 162 lines the a 1,2-diacyl-sn-glycero-3-phospho-(1'-sn-glycerol) pocket. A run of 4 helical transmembrane segments spans residues 213–233 (IPLFLIESFFNTIFFVLIYFV), 243–263 (GTIGFSYFLATGIIRLILENF), 274–294 (ITTSILFIVVGILGIFYCQFI), and 302–322 (FWTYFFLYAFYKVAAFFTTLF).

The protein belongs to the Lgt family.

The protein localises to the cell membrane. It catalyses the reaction L-cysteinyl-[prolipoprotein] + a 1,2-diacyl-sn-glycero-3-phospho-(1'-sn-glycerol) = an S-1,2-diacyl-sn-glyceryl-L-cysteinyl-[prolipoprotein] + sn-glycerol 1-phosphate + H(+). It participates in protein modification; lipoprotein biosynthesis (diacylglyceryl transfer). In terms of biological role, catalyzes the transfer of the diacylglyceryl group from phosphatidylglycerol to the sulfhydryl group of the N-terminal cysteine of a prolipoprotein, the first step in the formation of mature lipoproteins. The polypeptide is Phosphatidylglycerol--prolipoprotein diacylglyceryl transferase (Mycoplasma genitalium (strain ATCC 33530 / DSM 19775 / NCTC 10195 / G37) (Mycoplasmoides genitalium)).